Here is a 2898-residue protein sequence, read N- to C-terminus: Pericentrin (2898 aa).

The tract at residues 1–117 (MEDEQEQRRR…QPPPPQTAHS (117 aa)) is disordered. Residues 34-44 (SKKKTAKRKGS) show a composition bias toward basic residues. A Phosphoserine modification is found at serine 44. Coiled-coil stretches lie at residues 127–343 (LNNM…IRLL) and 382–434 (AQQQ…DSLE). Positions 429 to 460 (REDSLESTEISSSCVLPEETSGREGKEPPDPL) are disordered. A compositionally biased stretch (basic and acidic residues) spans 448-457 (TSGREGKEPP). Coiled-coil stretches lie at residues 468–527 (KVQE…LREK), 611–696 (CALQ…LETH), 727–787 (VADV…SLRM), and 872–939 (SQDQ…LRRL). At serine 1022 the chain carries Phosphoserine. 3 coiled-coil regions span residues 1069 to 1383 (EREF…QENM), 1429 to 1482 (NEVV…SLMG), and 1529 to 1593 (QLLA…AKEA). Serine 1437 carries the post-translational modification Phosphoserine. 3 disordered regions span residues 1745 to 1786 (VASR…DDVL), 1815 to 1880 (TQEK…PLTP), and 1958 to 1979 (TSPS…GPDI). Composition is skewed to polar residues over residues 1747 to 1766 (SRDT…SENG) and 1817 to 1834 (EKLT…SGHS). Residues 1801–1822 (NQDLLVQVEMPDFPTQEKLTSQ) are interaction with CDK5RAP2. Phosphoserine occurs at positions 1828, 1859, 1860, and 1959. Residues 1963–1976 (ELARRSDGSRKSDG) are compositionally biased toward basic and acidic residues. Serine 1987 is subject to Phosphoserine. The segment covering 2046 to 2055 (SESQDPSSAL) has biased composition (polar residues). Residues 2046–2088 (SESQDPSSALNKGEPRDPLDGFPRDSQALSEVTTDKGEKESLE) are disordered. Basic and acidic residues-rich tracts occupy residues 2058–2068 (GEPRDPLDGFP) and 2078–2088 (TTDKGEKESLE). At serine 2128 the chain carries Phosphoserine. Coiled-coil stretches lie at residues 2211–2403 (KVEQ…EALQ) and 2429–2590 (HALL…ELSM). Disordered regions lie at residues 2509–2532 (VSGG…QFQE) and 2653–2684 (NRQS…QTTS). The interaction with NEK2 stretch occupies residues 2545–2810 (LCAAGLLTSF…SQRQRSPSGP (266 aa)). The span at 2653-2671 (NRQSKSSLKQDGTDLQSSL) shows a compositional bias: polar residues. A calmodulin-binding region spans residues 2758-2771 (KFRTAVRVVIAVLR). The tract at residues 2787-2898 (ALVHPKSTRH…QKSCHQKIKQ (112 aa)) is disordered. The segment covering 2792-2802 (KSTRHGHRTSQ) has biased composition (basic residues). Residues 2845–2860 (TSTPSSRLERSLTASQ) are compositionally biased toward polar residues. Basic and acidic residues predominate over residues 2861 to 2874 (DPEHSLTEYIHHLE). Serine 2865 is modified (phosphoserine).

In terms of assembly, interacts with DISC1 and PCM1. Binds calmodulin. Interacts with CEP131. Interacts with CDK5RAP2; the interaction is leading to centrosomal localization of PCNT and CDK5RAP2. Interacts with CHD3. Interacts with CHD4; the interaction regulates centrosome integrity. Interacts with NEK2. Interacts with CCDC13. Interacts with CEP68. Interacts with ATF5; the ATF5:PCNT:polyglutamylated tubulin (PGT) tripartite unites the mother centriole and the pericentriolar material (PCM) in the centrosome. Cleaved during mitotis which leads to removal of CDK5RAP2 from the centrosome and promotes centriole disengagement and subsequent centriole separation. The C-terminal fragment is rapidly degraded following cleavage. Post-translationally, ubiquitinated by TRIM43; leading to proteasomal degradation. As to expression, expressed in heart and lung (at protein level). Expressed in kidney, thymus, liver, brain, muscle, testis, spleen, lung and heart.

It is found in the cytoplasm. The protein localises to the cytoskeleton. It localises to the microtubule organizing center. The protein resides in the centrosome. Its function is as follows. Integral component of the filamentous matrix of the centrosome involved in the initial establishment of organized microtubule arrays in both mitosis and meiosis. Plays a role, together with DISC1, in the microtubule network formation. Is an integral component of the pericentriolar material (PCM). May play an important role in preventing premature centrosome splitting during interphase by inhibiting NEK2 kinase activity at the centrosome. The chain is Pericentrin (Pcnt) from Mus musculus (Mouse).